The primary structure comprises 184 residues: GMP synthase [glutamine-hydrolyzing] subunit A (184 aa).

The region spanning 3–184 (HIAVIDNHGQ…VFKNFIARCQ (182 aa)) is the Glutamine amidotransferase type-1 domain. The Nucleophile role is filled by Cys75. Active-site residues include His163 and Glu165.

As to quaternary structure, heterodimer composed of a glutamine amidotransferase subunit (A) and a GMP-binding subunit (B).

It carries out the reaction XMP + L-glutamine + ATP + H2O = GMP + L-glutamate + AMP + diphosphate + 2 H(+). Its pathway is purine metabolism; GMP biosynthesis; GMP from XMP (L-Gln route): step 1/1. Functionally, catalyzes the synthesis of GMP from XMP. The sequence is that of GMP synthase [glutamine-hydrolyzing] subunit A from Haloquadratum walsbyi (strain DSM 16790 / HBSQ001).